Reading from the N-terminus, the 662-residue chain is Probable dolichyl-phosphate-mannose--protein mannosyltransferase 7 (662 aa).

At 1-26 (MKDLRLQGPYRKYIPYNIFQQCGIGH) the chain is on the lumenal side. The chain crosses the membrane as a helical span at residues 27–47 (LKTLDYIFAFLIVITNFTLIW). The Cytoplasmic segment spans residues 48–159 (KSHSSSFWNR…GTIISFDSLE (112 aa)). Residues 160–180 (WCLFSVVIYSFISISIAKLGT) form a helical membrane-spanning segment. Topologically, residues 181–195 (TNWFANVITLSISLG) are lumenal. A helical transmembrane segment spans residues 196–216 (LAISSKFIGIVTWAFVILSFV). Topologically, residues 217–235 (RQFDRLISDVKVTTIQIIK) are cytoplasmic. The chain crosses the membrane as a helical span at residues 236–256 (FVILCLLFVLIIPGSIFIISY). At 257–482 (SNLLSNFKTD…MEYPVIPRTT (226 aa)) the chain is on the lumenal side. Positions 289–344 (PSRLYYGSTITLRHLDSMVGYLASHDISYPSDVDEQLVALSFEEFAADNEWLIEHP) constitute an MIR 1 domain. An N-linked (GlcNAc...) asparagine glycan is attached at Asn347. MIR domains lie at 359–418 (LIPV…VLLI) and 432–488 (DKYI…IDSV). Residues 483-503 (FLIDSVQLPVDFQVPMIEYYI) form a helical membrane-spanning segment. Topologically, residues 504 to 565 (GKISSSAEFN…KWPITLDTDS (62 aa)) are cytoplasmic. A helical membrane pass occupies residues 566 to 586 (PVWFNFAWYGSLLSMIIFMCV). At 587–617 (QCKRMISWNPWTTAEPSFSIKWEVYNEFGWE) the chain is on the lumenal side. A helical membrane pass occupies residues 618–638 (CIVGWFLHFYIFTMSPHFNLG). Residues 639–662 (KKLYFQSFFFSVLCLLESLDCLAK) lie on the Cytoplasmic side of the membrane.

Belongs to the glycosyltransferase 39 family.

It is found in the endoplasmic reticulum membrane. It catalyses the reaction a di-trans,poly-cis-dolichyl beta-D-mannosyl phosphate + L-seryl-[protein] = 3-O-(alpha-D-mannosyl)-L-seryl-[protein] + a di-trans,poly-cis-dolichyl phosphate + H(+). The catalysed reaction is a di-trans,poly-cis-dolichyl beta-D-mannosyl phosphate + L-threonyl-[protein] = 3-O-(alpha-D-mannosyl)-L-threonyl-[protein] + a di-trans,poly-cis-dolichyl phosphate + H(+). The protein operates within protein modification; protein glycosylation. In terms of biological role, probable protein O-mannosyltransferase involved in O-glycosylation which is essential for cell wall rigidity. Transfers mannose from Dol-P-mannose to Ser or Thr residues on proteins. This is Probable dolichyl-phosphate-mannose--protein mannosyltransferase 7 from Saccharomyces cerevisiae (strain ATCC 204508 / S288c) (Baker's yeast).